The following is a 159-amino-acid chain: 6,7-dimethyl-8-ribityllumazine synthase (159 aa).

5-amino-6-(D-ribitylamino)uracil-binding positions include phenylalanine 22, 57–59 (AVE), and 81–83 (AVI). (2S)-2-hydroxy-3-oxobutyl phosphate is bound at residue 86 to 87 (GT). Residue histidine 89 is the Proton donor of the active site. Position 114 (phenylalanine 114) interacts with 5-amino-6-(D-ribitylamino)uracil. Arginine 128 provides a ligand contact to (2S)-2-hydroxy-3-oxobutyl phosphate.

It belongs to the DMRL synthase family. Forms an icosahedral capsid composed of 60 subunits, arranged as a dodecamer of pentamers.

The enzyme catalyses (2S)-2-hydroxy-3-oxobutyl phosphate + 5-amino-6-(D-ribitylamino)uracil = 6,7-dimethyl-8-(1-D-ribityl)lumazine + phosphate + 2 H2O + H(+). The protein operates within cofactor biosynthesis; riboflavin biosynthesis; riboflavin from 2-hydroxy-3-oxobutyl phosphate and 5-amino-6-(D-ribitylamino)uracil: step 1/2. In terms of biological role, catalyzes the formation of 6,7-dimethyl-8-ribityllumazine by condensation of 5-amino-6-(D-ribitylamino)uracil with 3,4-dihydroxy-2-butanone 4-phosphate. This is the penultimate step in the biosynthesis of riboflavin. The protein is 6,7-dimethyl-8-ribityllumazine synthase of Shewanella baltica (strain OS155 / ATCC BAA-1091).